A 273-amino-acid chain; its full sequence is Mitochondrial distribution and morphology protein 12 (273 aa).

In terms of domain architecture, SMP-LTD spans 1 to 273 (MSIDFDWSKL…LVWPSYITIE (273 aa)). The segment at 124–145 (LTSPIPESRPSTPMDNHQERDR) is disordered.

This sequence belongs to the MDM12 family. As to quaternary structure, component of the ER-mitochondria encounter structure (ERMES) or MDM complex, composed of mmm1, mdm10, mdm12 and mdm34. A mmm1 homodimer associates with one molecule of mdm12 on each side in a pairwise head-to-tail manner, and the SMP-LTD domains of mmm1 and mdm12 generate a continuous hydrophobic tunnel for phospholipid trafficking.

The protein resides in the mitochondrion outer membrane. The protein localises to the endoplasmic reticulum membrane. Component of the ERMES/MDM complex, which serves as a molecular tether to connect the endoplasmic reticulum (ER) and mitochondria. Components of this complex are involved in the control of mitochondrial shape and protein biogenesis, and function in nonvesicular lipid trafficking between the ER and mitochondria. Mdm12 is required for the interaction of the ER-resident membrane protein mmm1 and the outer mitochondrial membrane-resident beta-barrel protein mdm10. The mdm12-mmm1 subcomplex functions in the major beta-barrel assembly pathway that is responsible for biogenesis of all mitochondrial outer membrane beta-barrel proteins, and acts in a late step after the SAM complex. The mdm10-mdm12-mmm1 subcomplex further acts in the TOM40-specific pathway after the action of the mdm12-mmm1 complex. Essential for establishing and maintaining the structure of mitochondria and maintenance of mtDNA nucleoids. This is Mitochondrial distribution and morphology protein 12 from Schizosaccharomyces pombe (strain 972 / ATCC 24843) (Fission yeast).